Reading from the N-terminus, the 435-residue chain is tRNA modification GTPase MnmE (435 aa).

R20, E77, and K117 together coordinate (6S)-5-formyl-5,6,7,8-tetrahydrofolate. Residues 214–359 form the TrmE-type G domain; sequence GFKIVIVGAP…FMKELESFCL (146 aa). Residues 224–229, 243–249, and 268–271 each bind GTP; these read NSGKSS, TEEAGTT, and DTAG. Mg(2+) contacts are provided by S228 and T249. K435 serves as a coordination point for (6S)-5-formyl-5,6,7,8-tetrahydrofolate.

Belongs to the TRAFAC class TrmE-Era-EngA-EngB-Septin-like GTPase superfamily. TrmE GTPase family. As to quaternary structure, homodimer. Heterotetramer of two MnmE and two MnmG subunits. Requires K(+) as cofactor.

Its subcellular location is the cytoplasm. Exhibits a very high intrinsic GTPase hydrolysis rate. Involved in the addition of a carboxymethylaminomethyl (cmnm) group at the wobble position (U34) of certain tRNAs, forming tRNA-cmnm(5)s(2)U34. The protein is tRNA modification GTPase MnmE of Bartonella henselae (strain ATCC 49882 / DSM 28221 / CCUG 30454 / Houston 1) (Rochalimaea henselae).